The chain runs to 206 residues: dITP/XTP pyrophosphatase (206 aa).

10-15 (SGNAGK) is a substrate binding site. Mg(2+)-binding residues include E40 and D69. D69 (proton acceptor) is an active-site residue. Substrate-binding positions include S70, 148-151 (FGYD), K171, and 176-177 (HR).

Belongs to the HAM1 NTPase family. In terms of assembly, homodimer. The cofactor is Mg(2+).

The enzyme catalyses XTP + H2O = XMP + diphosphate + H(+). It carries out the reaction dITP + H2O = dIMP + diphosphate + H(+). The catalysed reaction is ITP + H2O = IMP + diphosphate + H(+). Functionally, pyrophosphatase that catalyzes the hydrolysis of nucleoside triphosphates to their monophosphate derivatives, with a high preference for the non-canonical purine nucleotides XTP (xanthosine triphosphate), dITP (deoxyinosine triphosphate) and ITP. Seems to function as a house-cleaning enzyme that removes non-canonical purine nucleotides from the nucleotide pool, thus preventing their incorporation into DNA/RNA and avoiding chromosomal lesions. This chain is dITP/XTP pyrophosphatase, found in Synechococcus sp. (strain CC9311).